A 947-amino-acid polypeptide reads, in one-letter code: Zinc finger CCCH domain-containing protein 18 (947 aa).

Methionine 1 is subject to N-acetylmethionine. Disordered regions lie at residues 1 to 218, 275 to 295, and 387 to 921; these read MDVA…PRPT, GGPV…TESA, and YTEA…TLSR. Phosphoserine is present on residues serine 6, serine 32, serine 44, serine 57, serine 63, serine 70, serine 74, serine 79, and serine 91. Residues 73–85 are compositionally biased toward basic and acidic residues; that stretch reads KSQDQDSEAHELS. Over residues 94-104 the composition is skewed to acidic residues; sequence EEGDDAEEDGT. Threonine 104 carries the post-translational modification Phosphothreonine. Phosphoserine occurs at positions 105 and 113. Residues 105–119 are compositionally biased toward basic and acidic residues; sequence SDLRDEASSVTRELD. Acidic residues-rich tracts occupy residues 120–131 and 138–153; these read EHELDYDEEVPE and QEEE…EEEK. The span at 160 to 185 shows a compositional bias: basic and acidic residues; the sequence is EEGKPDVQSVGEKEPTEAAKEKKKED. Serine 168 carries the post-translational modification Phosphoserine. Residues 186–202 are compositionally biased toward acidic residues; that stretch reads DDGEIDDGEIDDDDLEE. Residues 203–212 show a composition bias toward basic and acidic residues; the sequence is GEVKDPSDRK. The C3H1-type zinc-finger motif lies at 214–240; sequence RPRPTCRFFMKGNCTWGMNCRFIHPGV. Over residues 391–479 the composition is skewed to basic and acidic residues; that stretch reads EPYHNYRDRE…DRDKDKEKPK (89 aa). Phosphoserine is present on serine 482. Lysine 505 is covalently cross-linked (Glycyl lysine isopeptide (Lys-Gly) (interchain with G-Cter in SUMO2)). Over residues 505 to 515 the composition is skewed to basic and acidic residues; it reads KRADEWKDPWR. Phosphoserine is present on residues serine 527, serine 529, and serine 531. Low complexity predominate over residues 540 to 601; that stretch reads SASSASASNS…SRSRSFSSSP (62 aa). A compositionally biased stretch (pro residues) spans 602–611; that stretch reads SPSPTPSPHR. Glycyl lysine isopeptide (Lys-Gly) (interchain with G-Cter in SUMO2) cross-links involve residues lysine 617 and lysine 656. The span at 656-665 shows a compositional bias: basic and acidic residues; sequence KPGDLREARR. Composition is skewed to low complexity over residues 687–720 and 731–745; these read GSSY…SVHS and ASPV…PTPA. Basic and acidic residues predominate over residues 755-769; that stretch reads KKEDGVREEKRKRDP. Residues 773 to 804 are compositionally biased toward low complexity; sequence PPKSSKAPAGGKASQQAAAPQQAAPGQPQQGS. Lysine 809 bears the N6-acetyllysine mark. Lysine 812 participates in a covalent cross-link: Glycyl lysine isopeptide (Lys-Gly) (interchain with G-Cter in SUMO2). The span at 819–836 shows a compositional bias: basic and acidic residues; it reads AAEKGSRKRYEPSDKDRQ. A phosphoserine mark is found at serine 837, serine 846, serine 862, serine 887, and serine 890. Residues 887–918 are compositionally biased toward low complexity; that stretch reads SPQSKSSSKVTSVPGKATDTATAGTKSGKAST. Lysine 902 is covalently cross-linked (Glycyl lysine isopeptide (Lys-Gly) (interchain with G-Cter in SUMO2)). A coiled-coil region spans residues 915-944; that stretch reads KASTLSRREELLKQLKAVEDAIARKRAKIP.

In terms of assembly, interacts with ZFC3H1 in a RNase-insensitive manner.

It localises to the nucleus. This Rattus norvegicus (Rat) protein is Zinc finger CCCH domain-containing protein 18 (Zc3h18).